The primary structure comprises 294 residues: ATP synthase gamma chain (294 aa).

The protein belongs to the ATPase gamma chain family. As to quaternary structure, F-type ATPases have 2 components, CF(1) - the catalytic core - and CF(0) - the membrane proton channel. CF(1) has five subunits: alpha(3), beta(3), gamma(1), delta(1), epsilon(1). CF(0) has three main subunits: a, b and c.

The protein resides in the cell inner membrane. In terms of biological role, produces ATP from ADP in the presence of a proton gradient across the membrane. The gamma chain is believed to be important in regulating ATPase activity and the flow of protons through the CF(0) complex. The protein is ATP synthase gamma chain of Campylobacter jejuni (strain RM1221).